The following is a 382-amino-acid chain: Alanine racemase 1 (382 aa).

The active-site Proton acceptor; specific for D-alanine is the Lys-39. N6-(pyridoxal phosphate)lysine is present on Lys-39. Arg-138 contacts substrate. Tyr-265 functions as the Proton acceptor; specific for L-alanine in the catalytic mechanism. A substrate-binding site is contributed by Met-312.

This sequence belongs to the alanine racemase family. Pyridoxal 5'-phosphate is required as a cofactor.

The catalysed reaction is L-alanine = D-alanine. It participates in amino-acid biosynthesis; D-alanine biosynthesis; D-alanine from L-alanine: step 1/1. Functionally, catalyzes the interconversion of L-alanine and D-alanine. May also act on other amino acids. This Staphylococcus aureus (strain MRSA252) protein is Alanine racemase 1 (alr1).